The primary structure comprises 125 residues: Desulfoferrodoxin (125 aa).

5 residues coordinate Fe cation: H49, H69, H75, C115, and H118.

The protein belongs to the desulfoferrodoxin family. Cu(2+) is required as a cofactor.

It catalyses the reaction reduced [rubredoxin] + superoxide + 2 H(+) = oxidized [rubredoxin] + H2O2. Its function is as follows. Catalyzes the reduction of superoxide to hydrogen peroxide, using electrons from NADH and NADH:rubredoxin oxidoreductase (NROR) and rubredoxin (Rd) as electron transport intermediaries between NADH and Dfx. Is a key factor in the superoxide reductase dependent part of a pathway for detoxification of reactive oxygen species (ROS) in C.acetobutylicum, an obligate anaerobic bacterium. This Clostridium acetobutylicum (strain ATCC 824 / DSM 792 / JCM 1419 / IAM 19013 / LMG 5710 / NBRC 13948 / NRRL B-527 / VKM B-1787 / 2291 / W) protein is Desulfoferrodoxin (dfx).